Consider the following 467-residue polypeptide: ATP synthase subunit beta (467 aa).

153-160 (GGAGVGKT) contacts ATP.

Belongs to the ATPase alpha/beta chains family. In terms of assembly, F-type ATPases have 2 components, CF(1) - the catalytic core - and CF(0) - the membrane proton channel. CF(1) has five subunits: alpha(3), beta(3), gamma(1), delta(1), epsilon(1). CF(0) has three main subunits: a(1), b(2) and c(9-12). The alpha and beta chains form an alternating ring which encloses part of the gamma chain. CF(1) is attached to CF(0) by a central stalk formed by the gamma and epsilon chains, while a peripheral stalk is formed by the delta and b chains.

It is found in the cell membrane. The enzyme catalyses ATP + H2O + 4 H(+)(in) = ADP + phosphate + 5 H(+)(out). Its function is as follows. Produces ATP from ADP in the presence of a proton gradient across the membrane. The catalytic sites are hosted primarily by the beta subunits. The chain is ATP synthase subunit beta from Lactiplantibacillus plantarum (strain ATCC BAA-793 / NCIMB 8826 / WCFS1) (Lactobacillus plantarum).